We begin with the raw amino-acid sequence, 195 residues long: Probable septum site-determining protein MinC (195 aa).

Belongs to the MinC family. Interacts with MinD and FtsZ.

Its function is as follows. Cell division inhibitor that blocks the formation of polar Z ring septums. Rapidly oscillates between the poles of the cell to destabilize FtsZ filaments that have formed before they mature into polar Z rings. Prevents FtsZ polymerization. The protein is Probable septum site-determining protein MinC of Helicobacter pylori (strain P12).